Here is a 411-residue protein sequence, read N- to C-terminus: Putative glycosyltransferase SCO3672 (411 aa).

10 helical membrane-spanning segments follow: residues 7–27 (IAAA…LAAL), 45–65 (PVPL…AWAG), 70–90 (VVPL…VGAL), 120–140 (ETGP…TGAF), 148–168 (GVVG…AAVE), 169–189 (LMDG…GFLL), 197–217 (IALG…AAVL), 227–247 (GAGV…LVLL), 277–297 (GVVV…VLAH), and 301–321 (VGGQ…LGLL).

It belongs to the glycosyltransferase 4 family.

It is found in the cell membrane. The chain is Putative glycosyltransferase SCO3672 from Streptomyces coelicolor (strain ATCC BAA-471 / A3(2) / M145).